A 425-amino-acid polypeptide reads, in one-letter code: Bifunctional phosphoribosylaminoimidazole carboxylase/phosphoribosylaminoimidazole succinocarboxamide synthetase (425 aa).

Alanine 2 carries the post-translational modification N-acetylalanine. The tract at residues alanine 2–leucine 260 is SAICAR synthetase domain. At tyrosine 22 the chain carries Phosphotyrosine. Position 27 is a phosphoserine (serine 27). Residue lysine 36 is modified to N6-acetyllysine. The residue at position 107 (serine 107) is a Phosphoserine. Threonine 238 carries the phosphothreonine modification. An N6-acetyllysine modification is found at lysine 247. A linker region spans residues lysine 261 to cysteine 266. Positions arginine 267–leucine 425 are AIR carboxylase domain. The residue at position 274 (serine 274) is a Phosphoserine. Serine 332 is a binding site for CO2.

The protein in the N-terminal section; belongs to the SAICAR synthetase family. This sequence in the C-terminal section; belongs to the AIR carboxylase family. Class II subfamily. As to quaternary structure, homooctamer.

The catalysed reaction is 5-amino-1-(5-phospho-D-ribosyl)imidazole-4-carboxylate + L-aspartate + ATP = (2S)-2-[5-amino-1-(5-phospho-beta-D-ribosyl)imidazole-4-carboxamido]succinate + ADP + phosphate + 2 H(+). It carries out the reaction 5-amino-1-(5-phospho-D-ribosyl)imidazole-4-carboxylate + H(+) = 5-amino-1-(5-phospho-beta-D-ribosyl)imidazole + CO2. It participates in purine metabolism; IMP biosynthesis via de novo pathway; 5-amino-1-(5-phospho-D-ribosyl)imidazole-4-carboxamide from 5-amino-1-(5-phospho-D-ribosyl)imidazole-4-carboxylate: step 1/2. It functions in the pathway purine metabolism; IMP biosynthesis via de novo pathway; 5-amino-1-(5-phospho-D-ribosyl)imidazole-4-carboxylate from 5-amino-1-(5-phospho-D-ribosyl)imidazole (carboxylase route): step 1/1. In terms of biological role, bifunctional phosphoribosylaminoimidazole carboxylase and phosphoribosylaminoimidazole succinocarboxamide synthetase catalyzing two reactions of the de novo purine biosynthetic pathway. The sequence is that of Bifunctional phosphoribosylaminoimidazole carboxylase/phosphoribosylaminoimidazole succinocarboxamide synthetase from Rattus norvegicus (Rat).